The sequence spans 137 residues: 1,4-dihydroxy-2-naphthoyl-CoA hydrolase (137 aa).

Residue Asp12 is part of the active site.

This sequence belongs to the 4-hydroxybenzoyl-CoA thioesterase family. DHNA-CoA hydrolase subfamily.

It catalyses the reaction 1,4-dihydroxy-2-naphthoyl-CoA + H2O = 1,4-dihydroxy-2-naphthoate + CoA + H(+). It participates in cofactor biosynthesis; phylloquinone biosynthesis. Its pathway is quinol/quinone metabolism; 1,4-dihydroxy-2-naphthoate biosynthesis; 1,4-dihydroxy-2-naphthoate from chorismate: step 7/7. Functionally, catalyzes the hydrolysis of 1,4-dihydroxy-2-naphthoyl-CoA (DHNA-CoA) to 1,4-dihydroxy-2-naphthoate (DHNA), a reaction involved in phylloquinone (vitamin K1) biosynthesis. The sequence is that of 1,4-dihydroxy-2-naphthoyl-CoA hydrolase from Acaryochloris marina (strain MBIC 11017).